The following is a 525-amino-acid chain: 2,3-bisphosphoglycerate-independent phosphoglycerate mutase (525 aa).

Asp-18 and Ser-68 together coordinate Mn(2+). Ser-68 functions as the Phosphoserine intermediate in the catalytic mechanism. Substrate contacts are provided by residues His-129, 159-160 (RD), Arg-194, Arg-200, 269-272 (RADR), and Lys-345. Mn(2+)-binding residues include Asp-413, His-417, Asp-454, His-455, and His-473.

This sequence belongs to the BPG-independent phosphoglycerate mutase family. Monomer. It depends on Mn(2+) as a cofactor.

It catalyses the reaction (2R)-2-phosphoglycerate = (2R)-3-phosphoglycerate. It functions in the pathway carbohydrate degradation; glycolysis; pyruvate from D-glyceraldehyde 3-phosphate: step 3/5. Catalyzes the interconversion of 2-phosphoglycerate and 3-phosphoglycerate. This is 2,3-bisphosphoglycerate-independent phosphoglycerate mutase from Chromohalobacter salexigens (strain ATCC BAA-138 / DSM 3043 / CIP 106854 / NCIMB 13768 / 1H11).